The sequence spans 463 residues: Trigger factor (463 aa).

The 82-residue stretch at 162 to 243 folds into the PPIase FKBP-type domain; it reads GDHVSIDLSA…VHSVKLKELP (82 aa). The span at 427–444 shows a compositional bias: polar residues; sequence SGNTIEPPTPVHTETITV. The interval 427–463 is disordered; that stretch reads SGNTIEPPTPVHTETITVASGDEETEESAAEQGETEK.

This sequence belongs to the FKBP-type PPIase family. Tig subfamily.

Its subcellular location is the cytoplasm. It carries out the reaction [protein]-peptidylproline (omega=180) = [protein]-peptidylproline (omega=0). Functionally, involved in protein export. Acts as a chaperone by maintaining the newly synthesized protein in an open conformation. Functions as a peptidyl-prolyl cis-trans isomerase. The sequence is that of Trigger factor from Thermobifida fusca (strain YX).